The sequence spans 895 residues: DNA double-strand break repair Rad50 ATPase (895 aa).

Residues 32–38 and Gln-137 contribute to the ATP site; that span reads NGAGKSS. Positions 183-253 form a coiled coil; sequence SDYDYLKNEL…LNAQLETIKK (71 aa). The Zinc-hook domain maps to 411-507; sequence RAEINSSLMQ…ERKHQKKLLD (97 aa). Zn(2+) is bound by residues Cys-455 and Cys-458. 2 coiled-coil regions span residues 464-510 and 618-647; these read TEKS…DRIN and ENSL…AMDE.

It belongs to the SMC family. RAD50 subfamily. Homodimer. Forms a heterotetramer composed of two Mre11 subunits and two Rad50 subunits. Zn(2+) serves as cofactor.

Its function is as follows. Part of the Rad50/Mre11 complex, which is involved in the early steps of DNA double-strand break (DSB) repair. The complex may facilitate opening of the processed DNA ends to aid in the recruitment of HerA and NurA. Rad50 controls the balance between DNA end bridging and DNA resection via ATP-dependent structural rearrangements of the Rad50/Mre11 complex. The protein is DNA double-strand break repair Rad50 ATPase of Thermoplasma volcanium (strain ATCC 51530 / DSM 4299 / JCM 9571 / NBRC 15438 / GSS1).